The chain runs to 343 residues: MTNFYKVCLAVFILVCCNISHAAVSFIGSTENDVGPSQGSYSSTHAMDNLPFVYNTGYNIGYQNANVWRISGGFCVGLDGKVDLPVVGSLDGQSIYGLTEEVGLLIWMGDTNYSRGTAMSGNSWENVFSGWCVGNYVSTQGLSVHVRPVILKRNSSAQYSVQKTSIGSIRMRPYNGSSAGSVQTTVNFSLNPFTLNDTVTSCRLLTPSAVNVSLAAISAGQLPSSGDEVVAGTTSLKLQCDAGVTVWATLTDATTPSNRSDILTLTGASTATGVGLRIYKNTDSTPLKFGPDSPVKGNENQWQLSTGTETSPSVRLYVKYVNTGEGINPGTVNGISTFTFSYQ.

A signal peptide spans 1–22; the sequence is MTNFYKVCLAVFILVCCNISHA. The interval 23-199 is receptor-binding lectin domain; sequence AVSFIGSTEN…LNPFTLNDTV (177 aa). Residues 65 to 66, 110 to 111, and 138 to 141 contribute to the a carbohydrate site; these read AN, DT, and STQG. Residues Cys75 and Cys132 are joined by a disulfide bond. The tract at residues 200-343 is fimbrillin-binding domain; the sequence is TSCRLLTPSA…GISTFTFSYQ (144 aa). Residues 287 to 307 are disordered; that stretch reads LKFGPDSPVKGNENQWQLSTG. Over residues 298–307 the composition is skewed to polar residues; the sequence is NENQWQLSTG.

Belongs to the fimbrial protein family.

It localises to the fimbrium. Functionally, essential fimbrial adhesion factor that mediates binding to N-acetylglucosamine-containing receptors in the host intestinal microvilli, leading to colonization of the intestinal tissue, and diarrhea or septicemia. Also confers adhesiveness to laminin and basement membranes. May be involved in the initiation of polymerization of fimbrillin monomers during fimbrial filament biogenesis. This Escherichia coli protein is F17g-G fimbrial adhesin (f17gG).